Reading from the N-terminus, the 535-residue chain is Cytochrome c oxidase subunit 1 (535 aa).

A helical transmembrane segment spans residues 21–43; the sequence is VLYFIFALFSAMIGTGLSAIIRL. The Ca(2+) site is built by E44 and G49. 6 helical membrane-spanning segments follow: residues 63–85, 106–128, 153–175, 188–210, 242–264, and 271–293; these read VITA…GGFG, ISFW…EAGA, IFSL…TTFI, PLFA…VLAA, YWWN…SHAV, and PVFG…FCVW. H67 provides a ligand contact to Fe(II)-heme a. H246 serves as a coordination point for Cu cation. Positions 246–250 form a cross-link, 1'-histidyl-3'-tyrosine (His-Tyr); sequence HPEVY. Residue Y250 participates in O2 binding. H295 and H296 together coordinate Cu cation. 2 helical membrane-spanning segments follow: residues 308 to 330 and 342 to 364; these read AYFT…SWLA and TALF…VVLA. H373 and D374 together coordinate Mg(2+). The next 3 membrane-spanning stretches (helical) occupy residues 379-401, 414-436, and 456-478; these read VAHF…WYLW, LSHI…MHFL, and NQVA…YVVY. H381 is a binding site for heme a3. H383 lines the Fe(II)-heme a pocket.

Belongs to the heme-copper respiratory oxidase family. As to quaternary structure, component of the cytochrome c oxidase (complex IV, CIV), a multisubunit enzyme composed of a catalytic core of 3 subunits and several supernumerary subunits. The complex exists as a monomer or a dimer and forms supercomplexes (SCs) in the inner mitochondrial membrane with ubiquinol-cytochrome c oxidoreductase (cytochrome b-c1 complex, complex III, CIII). Heme serves as cofactor. Requires Cu cation as cofactor.

The protein resides in the mitochondrion inner membrane. The catalysed reaction is 4 Fe(II)-[cytochrome c] + O2 + 8 H(+)(in) = 4 Fe(III)-[cytochrome c] + 2 H2O + 4 H(+)(out). Its pathway is energy metabolism; oxidative phosphorylation. Functionally, component of the cytochrome c oxidase, the last enzyme in the mitochondrial electron transport chain which drives oxidative phosphorylation. The respiratory chain contains 3 multisubunit complexes succinate dehydrogenase (complex II, CII), ubiquinol-cytochrome c oxidoreductase (cytochrome b-c1 complex, complex III, CIII) and cytochrome c oxidase (complex IV, CIV), that cooperate to transfer electrons derived from NADH and succinate to molecular oxygen, creating an electrochemical gradient over the inner membrane that drives transmembrane transport and the ATP synthase. Cytochrome c oxidase is the component of the respiratory chain that catalyzes the reduction of oxygen to water. Electrons originating from reduced cytochrome c in the intermembrane space (IMS) are transferred via the dinuclear copper A center (CU(A)) of subunit 2 and heme A of subunit 1 to the active site in subunit 1, a binuclear center (BNC) formed by heme A3 and copper B (CU(B)). The BNC reduces molecular oxygen to 2 water molecules using 4 electrons from cytochrome c in the IMS and 4 protons from the mitochondrial matrix. This is Cytochrome c oxidase subunit 1 (COX1) from Yarrowia lipolytica (strain CLIB 122 / E 150) (Yeast).